We begin with the raw amino-acid sequence, 725 residues long: MSASDLTSVQAGAPQGRRQILVTSALPYANGQIHIGHLVEYIQTDIWVRTMRMHGHEIYYIGADDTHGTPVMLRAEQEGVSPKQLIERVWREHKRDFDSFGVSFDNFYTTDSDENRVLSETIYLALKEAGFIAEREIEQAYDPVRQMFLPDRFIKGECPKCHAKDQYGDSCEVCGTTYQPTDLIHPYSVVSGAAPVRKTSTHYFFRLSDPRCEAFLREWVSGLAQPEATNKMREWLGEAGEAKLADWDISRDAPYFGFEIPGAPGKYFYVWLDAPVGYYASFKNLCERRGLDFDAWIRKDSTTEQYHFIGKDILYFHTLFWPAMLEFSGHRTPTNVFAHGFLTVDGAKMSKSRGTFITAQSYIDTGLNPEWLRYYFAAKLNATMEDIDLNLEDFQARVNSDLVGKYVNIASRAAGFLLKRFDGRVQASAMNHPLLATLRGAIPQIAAHYEAREYGRALRQTMELADAVNGYVDSAKPWELAKDPANAVALHETCSVSLEAFRLLSLALKPVLPRVAQGVEAFLGIAPLTWADAGMPLSPEQPVRAYQHLMTRVDPKQIDALLAANRGSLQGTAAAAEAGAANGNGAGSKNGKGAKAAAQPAASAANADDGASPIISIDDFAKIDLRIAKIVACQAVEGSDKLLQLTLDVGEERTRNVFSGIKSAYRPEQLVGKLTVMVANLAPRKMKFGLSEGMVLAASAADEKAEPGLYILEPHSGAKPGMRVK.

The 'HIGH' region motif lies at 27–37; it reads PYANGQIHIGH. Zn(2+) is bound by residues C158, C161, C171, and C174. Residues 348-352 carry the 'KMSKS' region motif; that stretch reads KMSKS. K351 provides a ligand contact to ATP. A tRNA-binding domain is found at 619-725; it reads DFAKIDLRIA…SGAKPGMRVK (107 aa).

This sequence belongs to the class-I aminoacyl-tRNA synthetase family. MetG type 1 subfamily. As to quaternary structure, homodimer. It depends on Zn(2+) as a cofactor.

It is found in the cytoplasm. The catalysed reaction is tRNA(Met) + L-methionine + ATP = L-methionyl-tRNA(Met) + AMP + diphosphate. In terms of biological role, is required not only for elongation of protein synthesis but also for the initiation of all mRNA translation through initiator tRNA(fMet) aminoacylation. In Burkholderia pseudomallei (strain 668), this protein is Methionine--tRNA ligase.